We begin with the raw amino-acid sequence, 713 residues long: KNR4/SMI1 homolog (713 aa).

Disordered regions lie at residues 18 to 129, 255 to 274, 400 to 457, and 500 to 713; these read PDRY…VTRD, IFIN…SPVA, RHQM…SKPA, and EPLE…KGKK. Positions 22 to 34 are enriched in low complexity; it reads ASQQRSSKASQSA. Polar residues predominate over residues 35–65; the sequence is GANSQNRPLYNNDDNQSEMYQASSSYTGGYT. 2 stretches are compositionally biased toward low complexity: residues 66–81 and 88–103; these read NSPS…GAAA and SSRN…SSTS. The segment covering 260–270 has biased composition (polar residues); it reads NAGSPNSSTPG. The segment covering 400–412 has biased composition (basic and acidic residues); it reads RHQMQRREHERRQ. Residues 413-429 are compositionally biased toward low complexity; that stretch reads AAAAAQQQQQQQQHHAQ. Composition is skewed to basic and acidic residues over residues 507 to 605 and 613 to 662; these read EIKG…EEQK and AKAE…KIDE. Residues 663 to 686 show a composition bias toward acidic residues; the sequence is ENGNAEEADEEADDDDEDDEEEGD. The segment covering 701 to 713 has biased composition (basic residues); it reads SKSKKKNKKKGKK.

It belongs to the KNR4/SMI1 family.

The protein is KNR4/SMI1 homolog of Yarrowia lipolytica (strain CLIB 122 / E 150) (Yeast).